The primary structure comprises 269 residues: Novel plant SNARE 13 (269 aa).

The Cytoplasmic segment spans residues 1–217; it reads MASNLPMSPQ…IGRQVATDKC (217 aa). The stretch at 33–94 forms a coiled coil; sequence DKIKDSTRQS…KQSMIKELNS (62 aa). Ser-74 is subject to Phosphoserine. The region spanning 146 to 208 is the t-SNARE coiled-coil homology domain; it reads MKRMDETDQA…KKASQLVKEI (63 aa). The chain crosses the membrane as a helical; Anchor for type IV membrane protein span at residues 218-238; it reads IMGFLFLIVCGVVAIIIVKIV. Residues 239–269 lie on the Vesicular side of the membrane; sequence NPNNKDIRDIPGLAPPAQSRKLLYLRNQDYM.

It belongs to the novel plant SNARE family.

It localises to the membrane. In terms of biological role, vesicle trafficking protein that functions in the secretory pathway. The chain is Novel plant SNARE 13 (NPSN13) from Arabidopsis thaliana (Mouse-ear cress).